The primary structure comprises 355 residues: MDDNKKRALAAALGQIERQFGKGAVMRMGDHERQAIPAISTGSLGLDIALGIGGLPKGRIVEIYGPESSGKTTLTLSVIAEAQKNGATCAFVDAEHALDPEYAGKLGVNVDDLLVSQPDTGEQALEITDMLVRSNAVDVIIVDSVAALVPKAEIEGEMGDMHVGLQARLMSQALRKITGNIKNANCLVIFINQIRMKIGVMFGSPETTTGGNALKFYASVRLDIRRTGAVKEGDEVVGSETRVKIVKNKVSPPFRQAEFQILYGKGIYRNGEIIDLGVSQGLVEKSGAWYAYQGNKIGQGKANAAKYLAENPAIGAEIEKQIRDKLLTSGAVAAAGKAAAVEADADDMADADAGY.

65–72 (GPESSGKT) provides a ligand contact to ATP.

Belongs to the RecA family.

Its subcellular location is the cytoplasm. Its function is as follows. Can catalyze the hydrolysis of ATP in the presence of single-stranded DNA, the ATP-dependent uptake of single-stranded DNA by duplex DNA, and the ATP-dependent hybridization of homologous single-stranded DNAs. It interacts with LexA causing its activation and leading to its autocatalytic cleavage. The protein is Protein RecA of Pseudomonas putida (Arthrobacter siderocapsulatus).